Here is a 792-residue protein sequence, read N- to C-terminus: Kinesin-like protein KIF3C (792 aa).

The Kinesin motor domain maps to 10–363 (ALKVVARCRP…LRFANRAKNI (354 aa)). ATP is bound at residue 97–104 (GQTGTGKT). Disordered stretches follow at residues 249-287 (GSER…RPKE), 397-418 (MLGK…APAG), and 749-792 (RPST…LDHE). Over residues 257-268 (GPNTTGGTATQP) the composition is skewed to low complexity. Over residues 269-282 (TGGGGGGGGGGGGG) the composition is skewed to gly residues. Residues 374–627 (KDTLLREFQE…QNEQTRELKL (254 aa)) are a coiled coil. Residues 397 to 412 (MLGKRLRRKSSRRKKA) show a composition bias toward basic residues. Positions 628–792 (KYLIIENFIP…LRPTTVLDHE (165 aa)) are globular. Residues 773 to 792 (AHASLAASAALRPTTVLDHE) are compositionally biased toward low complexity.

The protein belongs to the TRAFAC class myosin-kinesin ATPase superfamily. Kinesin family. Kinesin II subfamily. Heterodimer of KIF3A and KIF3C.

Its subcellular location is the cytoplasm. The protein localises to the cytoskeleton. In terms of biological role, microtubule-based anterograde translocator for membranous organelles. This chain is Kinesin-like protein KIF3C (KIF3C), found in Bos taurus (Bovine).